The following is a 221-amino-acid chain: Max dimerization protein 1 (221 aa).

Residues 21–49 (RREREAEHGYASMLPYNSKERDGLKRKSK) carry the Nuclear localization signal motif. 2 disordered regions span residues 28-67 (HGYA…EKNR) and 176-202 (DWSS…DEGY). In terms of domain architecture, bHLH spans 55-107 (NSRSTHNEMEKNRRAHLRLCLEKLKILVPLGPESNRHTTLSLLTRAKSHIKKL). Positions 192–202 (SMQSICSDEGY) are enriched in polar residues.

Efficient DNA binding requires dimerization with another bHLH protein. Binds DNA as a heterodimer with MAX.

Its subcellular location is the nucleus. Functionally, transcriptional repressor. MAD binds with MAX to form a sequence-specific DNA-binding protein complex which recognizes the core sequence 5'-CAC[GA]TG-3'. MAD thus antagonizes MYC transcriptional activity by competing for MAX. The polypeptide is Max dimerization protein 1 (mxd1) (Xenopus tropicalis (Western clawed frog)).